The chain runs to 541 residues: Chaperonin GroEL (541 aa).

Residues 29–32, 86–90, Gly-413, 476–478, and Asp-492 contribute to the ATP site; these read TLGP, DGTTT, and NAA.

The protein belongs to the chaperonin (HSP60) family. As to quaternary structure, forms a cylinder of 14 subunits composed of two heptameric rings stacked back-to-back. Interacts with the co-chaperonin GroES.

Its subcellular location is the cytoplasm. The catalysed reaction is ATP + H2O + a folded polypeptide = ADP + phosphate + an unfolded polypeptide.. Functionally, together with its co-chaperonin GroES, plays an essential role in assisting protein folding. The GroEL-GroES system forms a nano-cage that allows encapsulation of the non-native substrate proteins and provides a physical environment optimized to promote and accelerate protein folding. The chain is Chaperonin GroEL from Streptococcus equi subsp. equi (strain 4047).